We begin with the raw amino-acid sequence, 207 residues long: MISYIKGELAEILPDVIVVEANGIGYNIYVPGSVPGELPSVGSEVKIYTYMNVKEDECSLFGFLTRDDLSMFKMLICVNGIGPKAALGALSNITADDLRFAVLADDVAAIKALPGIGPKTAQKIIIELKDKLKLDEVFESALSKNKKADNNSNVSNVMMIRNDAVEALVSLGYSSKDALVAVKEVEDIENKDSETVLKEALKKLVKF.

The tract at residues 1–64 (MISYIKGELA…EDECSLFGFL (64 aa)) is domain I. The tract at residues 65-143 (TRDDLSMFKM…LDEVFESALS (79 aa)) is domain II. The tract at residues 144 to 155 (KNKKADNNSNVS) is flexible linker. Positions 156 to 207 (NVMMIRNDAVEALVSLGYSSKDALVAVKEVEDIENKDSETVLKEALKKLVKF) are domain III.

Belongs to the RuvA family. In terms of assembly, homotetramer. Forms an RuvA(8)-RuvB(12)-Holliday junction (HJ) complex. HJ DNA is sandwiched between 2 RuvA tetramers; dsDNA enters through RuvA and exits via RuvB. An RuvB hexamer assembles on each DNA strand where it exits the tetramer. Each RuvB hexamer is contacted by two RuvA subunits (via domain III) on 2 adjacent RuvB subunits; this complex drives branch migration. In the full resolvosome a probable DNA-RuvA(4)-RuvB(12)-RuvC(2) complex forms which resolves the HJ.

It localises to the cytoplasm. The RuvA-RuvB-RuvC complex processes Holliday junction (HJ) DNA during genetic recombination and DNA repair, while the RuvA-RuvB complex plays an important role in the rescue of blocked DNA replication forks via replication fork reversal (RFR). RuvA specifically binds to HJ cruciform DNA, conferring on it an open structure. The RuvB hexamer acts as an ATP-dependent pump, pulling dsDNA into and through the RuvAB complex. HJ branch migration allows RuvC to scan DNA until it finds its consensus sequence, where it cleaves and resolves the cruciform DNA. This chain is Holliday junction branch migration complex subunit RuvA, found in Lachnospira eligens (strain ATCC 27750 / DSM 3376 / VPI C15-48 / C15-B4) (Eubacterium eligens).